The primary structure comprises 282 residues: Chlorite dismutase (282 aa).

The N-terminal stretch at 1–31 (MTNLSIHNFKLSLVAAVIGSAMVMTSSPVAA) is a signal peptide. Glu-104 serves as a coordination point for Ca(2+). His-204 lines the heme pocket. Catalysis depends on Arg-217, which acts as the Proton acceptor. Ca(2+) is bound by residues Asp-226 and Thr-265.

Belongs to the chlorite dismutase family. As to quaternary structure, homopentamer. It depends on heme b as a cofactor.

The protein localises to the periplasm. It catalyses the reaction chloride + O2 = chlorite. Its function is as follows. Catalyzes the heme-dependent decomposition of chlorite to O(2) and chloride with high efficiency and specificity. Used to detoxify chlorite, a by-product of the reduction of perchlorate, a primarily anthropogenic pollutant, in perchlorate-respiring bacteria. In Dechloromonas aromatica (strain RCB), this protein is Chlorite dismutase.